A 570-amino-acid polypeptide reads, in one-letter code: MMQKLIAQIEKGKPFFEKLSRNIYLRAIRDGFISAMPVILFSSIFLLIAYVPNIFGFKWDKGMEAILMKPYNYTMGLVAFLVAGTTAKSLTDSFNRKLESTNQINFISTMLAAMCGFLFLASDPAKDGGFLSAFMGTKGLLTAFLSAFVTVIVYNFCVKRNITIKMPKEVPPNISQVFKDLIPFSAVIIILYALDLVIRNSFKSNVAEGILKLFEPLFTAADGWIGVTIIFGAFALFWFVGIHGPSIVEPAIAAITYANIEANFKLLQAGEHADKIITSGTQMFIVTFGGTGATLVVPFMFMWMTKSKRNKAIGRASVVPTFFGVNEPILFGAPLVLNPVFFIPFVLAPIVNVWIFKLFVEVLGMNSFSVNLPWTTPGPLGIIMGTGFGLWSFVLAITLIVVDIIIYYPFLKVYDSEILDEEEGRKESNSDLKEKVAANFDTKKADSILAASGVSDDAAKASNITEQTNVLVLCAGGGTSGLLANALNKAAEEYHVPVKAAAGGYGAHMDIMKEYQLIILAPQVASNYEDIKQDTDRLGIKLAKTQGAEYIKLTRDGQAALDFVQQQFEN.

Residues 9–410 (IEKGKPFFEK…VVDIIIYYPF (402 aa)) enclose the PTS EIIC type-3 domain. 9 consecutive transmembrane segments (helical) span residues 31-51 (GFIS…IAYV), 65-85 (AILM…VAGT), 104-124 (INFI…ASDP), 133-153 (AFMG…TVIV), 178-198 (FKDL…DLVI), 223-243 (GWIG…VGIH), 283-303 (MFIV…MFMW), 340-360 (VFFI…KLFV), and 382-402 (IIMG…LIVV). A PTS EIIB type-3 domain is found at 467 to 570 (QTNVLVLCAG…LDFVQQQFEN (104 aa)). Catalysis depends on C474, which acts as the Phosphocysteine intermediate; for EIIB activity. Phosphocysteine; by EIIA is present on C474.

The protein resides in the cell membrane. The enzyme catalyses lactose(out) + N(pros)-phospho-L-histidyl-[protein] = lactose 6-phosphate(in) + L-histidyl-[protein]. Functionally, the phosphoenolpyruvate-dependent sugar phosphotransferase system (sugar PTS), a major carbohydrate active transport system, catalyzes the phosphorylation of incoming sugar substrates concomitantly with their translocation across the cell membrane. The enzyme II LacEF PTS system is involved in lactose transport. The sequence is that of PTS system lactose-specific EIICB component from Staphylococcus aureus (strain MSSA476).